A 198-amino-acid polypeptide reads, in one-letter code: Remorin (198 aa).

The span at 1–11 (MAELEAKKVEI) shows a compositional bias: basic and acidic residues. The disordered stretch occupies residues 1–24 (MAELEAKKVEIVDPAPPAPGPVEA). Residues 97 to 184 (EESEKSKAEN…LKAEELAAKY (88 aa)) adopt a coiled-coil conformation.

This sequence belongs to the remorin family. In terms of processing, the N-terminus is blocked. Phosphorylated.

Its subcellular location is the cell membrane. Its function is as follows. Binds to both simple and complex galacturonides. May be involved in cell-to-cell signaling and molecular transport. This chain is Remorin, found in Solanum tuberosum (Potato).